The chain runs to 174 residues: Adipose-secreted signaling protein (174 aa).

Ala2 carries the post-translational modification N-acetylalanine. A Phosphothreonine modification is found at Thr147.

It belongs to the ADISSP family.

Its subcellular location is the secreted. In terms of biological role, adipocyte-secreted protein (adipokine) that acts as a key regulator for white adipose tissue (WAT) thermogenesis and glucose homeostasis at least in part through activation of protein kinase A (PKA). The sequence is that of Adipose-secreted signaling protein from Bos taurus (Bovine).